We begin with the raw amino-acid sequence, 1014 residues long: Isoleucine--tRNA ligase (1014 aa).

Positions 48-58 (PTANGRPGIHH) match the 'HIGH' region motif. The 'KMSKS' region signature appears at 628-632 (KMSKS). Lys-631 is an ATP binding site.

The protein belongs to the class-I aminoacyl-tRNA synthetase family. IleS type 2 subfamily. As to quaternary structure, monomer. Requires Zn(2+) as cofactor.

The protein localises to the cytoplasm. The catalysed reaction is tRNA(Ile) + L-isoleucine + ATP = L-isoleucyl-tRNA(Ile) + AMP + diphosphate. In terms of biological role, catalyzes the attachment of isoleucine to tRNA(Ile). As IleRS can inadvertently accommodate and process structurally similar amino acids such as valine, to avoid such errors it has two additional distinct tRNA(Ile)-dependent editing activities. One activity is designated as 'pretransfer' editing and involves the hydrolysis of activated Val-AMP. The other activity is designated 'posttransfer' editing and involves deacylation of mischarged Val-tRNA(Ile). The polypeptide is Isoleucine--tRNA ligase (Dehalococcoides mccartyi (strain ATCC BAA-2266 / KCTC 15142 / 195) (Dehalococcoides ethenogenes (strain 195))).